The sequence spans 120 residues: Flagellar protein FliT (120 aa).

Residues 1–50 (MNDFISSLNNWQALYALSNTMLSLANSGQWDELIEQEVKYVTLVEAIARN) form a required for homodimerization region. The fliD binding stretch occupies residues 59-97 (FQEKARELLTKVLANEAALKIKLQARMEELRVLIEQNGN).

This sequence belongs to the FliT family. Homodimer. Interacts with FliD and FlhC.

The protein localises to the cytoplasm. Its subcellular location is the cytosol. Functionally, dual-function protein that regulates the transcription of class 2 flagellar operons and that also acts as an export chaperone for the filament-capping protein FliD. As a transcriptional regulator, acts as an anti-FlhDC factor; it directly binds FlhC, thus inhibiting the binding of the FlhC/FlhD complex to class 2 promoters, resulting in decreased expression of class 2 flagellar operons. As a chaperone, effects FliD transition to the membrane by preventing its premature polymerization, and by directing it to the export apparatus. In Cronobacter sakazakii (strain ATCC BAA-894) (Enterobacter sakazakii), this protein is Flagellar protein FliT.